We begin with the raw amino-acid sequence, 531 residues long: Peptide chain release factor 3 (531 aa).

One can recognise a tr-type G domain in the interval 10–278; that stretch reads ARRRTFAIIS…DFVEHAPGPL (269 aa). Residues 19–26, 87–91, and 141–144 contribute to the GTP site; these read SHPDAGKT, DTPGH, and NKLD.

It belongs to the TRAFAC class translation factor GTPase superfamily. Classic translation factor GTPase family. PrfC subfamily.

The protein localises to the cytoplasm. Increases the formation of ribosomal termination complexes and stimulates activities of RF-1 and RF-2. It binds guanine nucleotides and has strong preference for UGA stop codons. It may interact directly with the ribosome. The stimulation of RF-1 and RF-2 is significantly reduced by GTP and GDP, but not by GMP. The polypeptide is Peptide chain release factor 3 (Thioalkalivibrio sulfidiphilus (strain HL-EbGR7)).